Here is a 131-residue protein sequence, read N- to C-terminus: Arsenate reductase 1 (131 aa).

Residues C10, C82, and C89 each act as nucleophile in the active site. 2 cysteine pairs are disulfide-bonded: C10–C82 and C82–C89.

This sequence belongs to the low molecular weight phosphotyrosine protein phosphatase family. Thioredoxin-coupled ArsC subfamily.

It is found in the cytoplasm. It carries out the reaction arsenate + [thioredoxin]-dithiol + H(+) = arsenite + [thioredoxin]-disulfide + H2O. Functionally, catalyzes the reduction of arsenate [As(V)] to arsenite [As(III)]. The sequence is that of Arsenate reductase 1 from Staphylococcus saprophyticus subsp. saprophyticus (strain ATCC 15305 / DSM 20229 / NCIMB 8711 / NCTC 7292 / S-41).